A 637-amino-acid chain; its full sequence is Sodium-dependent proline transporter (637 aa).

Residues 1–45 (MKKLQEAHLRKPITPDLLMTPSDQGDVDLDVDFAADRGNWTGKLD) lie on the Cytoplasmic side of the membrane. At threonine 20 the chain carries Phosphothreonine. Serine 22 carries the post-translational modification Phosphoserine. 3 consecutive transmembrane segments (helical) span residues 46-66 (FLLSCIGYCVGLGNVWRFPYR), 74-93 (AFLVPYFLMLAICGIPLFFL), and 117-137 (GAGAAMLLIVGLVAIYYNMII). The Extracellular portion of the chain corresponds to 138–214 (AYVLFYLFAS…QGIGRPGEIR (77 aa)). Residue asparagine 182 is glycosylated (N-linked (GlcNAc...) asparagine). Transmembrane regions (helical) follow at residues 215–233 (WNLCLCLLLAWVIVFLCIL), 242–259 (VVYFTATFPYLILLMLLV), 295–312 (IFYSLGVGFGGLLTFASY), 324–345 (FIVTLGNAITSILAGFAIFSVL), 378–397 (LPLSPFWSFLFFFMLLTLGL), 425–443 (VFSGLICVAMYLMGLILTT), 459–479 (SFGLMVVVITTCLAVTRVYGI), 500–519 (ACWLFLSPATLLALLVYSIV), and 538–556 (LGILMGLLSCLMIPAGMLV). The Cytoplasmic segment spans residues 557 to 637 (AVLREEGSLW…IAEEEEESMM (81 aa)). Phosphoserine occurs at positions 573 and 582. Threonine 588 carries the phosphothreonine modification. At tyrosine 591 the chain carries Phosphotyrosine. 2 positions are modified to phosphoserine: serine 598 and serine 600.

It belongs to the sodium:neurotransmitter symporter (SNF) (TC 2.A.22) family. SLC6A7 subfamily.

The protein localises to the synaptic cell membrane. It catalyses the reaction L-proline(out) + chloride(out) + 2 Na(+)(out) = L-proline(in) + chloride(in) + 2 Na(+)(in). The catalysed reaction is L-pipecolate(out) + chloride(out) + 2 Na(+)(out) = L-pipecolate(in) + chloride(in) + 2 Na(+)(in). Its function is as follows. Brain specific sodium (and chloride)-dependent proline transporter. Terminates the action of proline by its high affinity sodium-dependent reuptake into presynaptic terminals. In Mus musculus (Mouse), this protein is Sodium-dependent proline transporter.